The following is a 464-amino-acid chain: GPI mannosyltransferase 2 (464 aa).

Over 1 to 70 (MYYIGHPSYY…MTRSGYNYFK (70 aa)) the chain is Cytoplasmic. A helical transmembrane segment spans residues 71-91 (GICVCTFLLSTILYLGIAVIM). Topologically, residues 92 to 166 (SHLCVFDDTA…ISFLAFRSKD (75 aa)) are lumenal. N108 and N139 each carry an N-linked (GlcNAc...) asparagine glycan. The helical transmembrane segment at 167–187 (VVLLGIVSCFASIFFHAIACY) threads the bilayer. Over 188–219 (ALYLLTKSIFSNQKMTAYTVIFYCFSPSGIYM) the chain is Cytoplasmic. Residues 220–240 (SVGYTESLFAAFSFLGLLLFI) form a helical membrane-spanning segment. The Lumenal portion of the chain corresponds to 241-260 (KKQQYPAAFLWSLATLIRSN). Residues 261-281 (GIFWCIFFGMPAIGTLKISLE) traverse the membrane as a helical segment. Over 282–289 (RLQLTFMQ) the chain is Cytoplasmic. The chain crosses the membrane as a helical span at residues 290–309 (VSQLVGYGTKCLIILVPFFY). At 310 to 356 (NQYLGFKLFCPGVAWCNKSLPLIYPAVQEKYWNVGFLRYWTLNNIPN) the chain is on the lumenal side. N-linked (GlcNAc...) asparagine glycosylation is present at N326. A helical transmembrane segment spans residues 357–377 (FLFALLSIIPILFALFYSISG). Topologically, residues 378 to 388 (STLHSFRSIKS) are cytoplasmic. Residues 389 to 409 (HLVLSALYLYIGCFHMHTQVL) form a helical membrane-spanning segment. At 410-440 (NRMSSALPLLYWSMAHATLYAKSRNLKAFGH) the chain is on the lumenal side. A helical membrane pass occupies residues 441–461 (CILFVWIVYTVIQAGLYGSFL). At 462 to 464 (PPA) the chain is on the cytoplasmic side.

Belongs to the PIGV family. In terms of assembly, part of the GPI mannosyltransferase 2 complex composed of gpi18 and C167.09.

The protein localises to the endoplasmic reticulum membrane. The protein operates within glycolipid biosynthesis; glycosylphosphatidylinositol-anchor biosynthesis. Functionally, mannosyltransferase involved in glycosylphosphatidylinositol-anchor biosynthesis. Responsible for the transfer of the second mannose to the glycosylphosphatidylinositol during GPI precursor assembly. This chain is GPI mannosyltransferase 2 (gpi18), found in Schizosaccharomyces pombe (strain 972 / ATCC 24843) (Fission yeast).